The primary structure comprises 414 residues: MVSTFSRKDQNYKNDDLNQPSKEGRFGKYGGQYVPETLMPALFELETAASNAWKDKLFVEELNHLLKTYVGRETPLYEAKRLTEHYKTKQATPRIWLKREDLNHTGAHKINNALGQALLAIRMGKKRIIAETGAGQHGVATATVCARFGLKCIIYMGAEDIKRQSLNVFRMKLLGAEVKVVNSGTATLKDATSEAIRDWVSNVETTHYILGSVAGPHPFPKIVRDFHAVIGEETKKQCLESFGSFPDILLACVGGGSNAMGLFHPFVKETSVRLIGVEAAGSGVDTDKHAATITKGSVGILHGSMSLLLQDDNGQVQEAHSISAGLDYPGVGPEHSHLKEIGRAEYGSVTDQEALDALKLVSELEGIIPALETSHAFAWLDKLCPTLEKDTHIVINCSGRGDKDVNTVASSLDI.

Positions methionine 1 to phenylalanine 26 are enriched in basic and acidic residues. Positions methionine 1–glycine 27 are disordered. At lysine 109 the chain carries N6-(pyridoxal phosphate)lysine.

It belongs to the TrpB family. Tetramer of two alpha and two beta chains. Pyridoxal 5'-phosphate serves as cofactor.

The catalysed reaction is (1S,2R)-1-C-(indol-3-yl)glycerol 3-phosphate + L-serine = D-glyceraldehyde 3-phosphate + L-tryptophan + H2O. The protein operates within amino-acid biosynthesis; L-tryptophan biosynthesis; L-tryptophan from chorismate: step 5/5. Its function is as follows. The beta subunit is responsible for the synthesis of L-tryptophan from indole and L-serine. In Prochlorococcus marinus (strain MIT 9301), this protein is Tryptophan synthase beta chain.